Reading from the N-terminus, the 815-residue chain is ABC transporter G family member 7 (815 aa).

Disordered stretches follow at residues 81 to 141 (NNID…TPNF) and 177 to 249 (KQIK…TNGK). Positions 164–199 (ENISYKTENRNYKKQIKDEKKRKKKLEMERSNSSNS) form a coiled coil. The segment covering 194–210 (SNSSNSNSSYDVESSAS) has biased composition (low complexity). Residues 211–248 (GLQTPQQSRSSILPTNSLNISKIDQSMNPQQTRSTTNG) are compositionally biased toward polar residues. Residues 242–485 (TRSTTNGKIE…SLPNQYQCPN (244 aa)) enclose the ABC transporter domain. Residue 274–281 (GPSGSGKS) coordinates ATP. Positions 562–810 (TQYITRLSGG…VSGYWAISKL (249 aa)) constitute an ABC transmembrane type-2 domain. 7 helical membrane-spanning segments follow: residues 568-588 (LSGG…LSPS), 598-618 (ILFF…TLFL), 647-667 (AFIQ…INHL), 675-695 (FITY…IIAI), 706-726 (FIYG…LVPV), 732-752 (SFGW…VMVA), and 788-808 (GIGI…WAIS).

Belongs to the ABC transporter superfamily. ABCG family.

The protein resides in the membrane. In Dictyostelium discoideum (Social amoeba), this protein is ABC transporter G family member 7 (abcG7).